The chain runs to 204 residues: RNA-free ribonuclease P (204 aa).

The protein belongs to the HARP family.

It carries out the reaction Endonucleolytic cleavage of RNA, removing 5'-extranucleotides from tRNA precursor.. Its function is as follows. RNA-free RNase P that catalyzes the removal of the 5'-leader sequence from pre-tRNA to produce the mature 5'-terminus. The sequence is that of RNA-free ribonuclease P from Pyrococcus abyssi (strain GE5 / Orsay).